A 171-amino-acid chain; its full sequence is PRA1-like protein (171 aa).

3 helical membrane passes run Ala-67–Ile-87, Val-119–Ile-139, and Trp-140–Val-160.

Belongs to the PRA1 family.

It is found in the membrane. In Schizosaccharomyces pombe (strain 972 / ATCC 24843) (Fission yeast), this protein is PRA1-like protein.